Reading from the N-terminus, the 160-residue chain is Large ribosomal subunit protein uL22c (160 aa).

Belongs to the universal ribosomal protein uL22 family. Part of the 50S ribosomal subunit.

The protein localises to the plastid. It is found in the chloroplast. Functionally, this protein binds specifically to 23S rRNA. Its function is as follows. The globular domain of the protein is located near the polypeptide exit tunnel on the outside of the subunit, while an extended beta-hairpin is found that lines the wall of the exit tunnel in the center of the 70S ribosome. The protein is Large ribosomal subunit protein uL22c (rpl22) of Arabis hirsuta (Hairy rock-cress).